A 63-amino-acid chain; its full sequence is MLDFEAIIEAGEQLIQKISFDLQHISSVLNTQVFDPFEYCYYRGGSFWEIESAEEFSGDDEFT.

The protein is Non-structural protein 3b of Avian infectious bronchitis virus (strain UK/68/84) (IBV).